The primary structure comprises 189 residues: Probable transcriptional regulator Rv1176c (189 aa).

It belongs to the PadR family. As to quaternary structure, homodimer.

It localises to the cytoplasm. Its function is as follows. Probable transcriptional regulator that may help mitigate the effect of oxidative stress and help mycobacteria survive inside macrophages. Binds to its own promoter region. In Mycobacterium tuberculosis (strain ATCC 25618 / H37Rv), this protein is Probable transcriptional regulator Rv1176c.